Consider the following 902-residue polypeptide: Inter-alpha-trypsin inhibitor heavy chain H1 (902 aa).

An N-terminal signal peptide occupies residues 1-28; the sequence is MDGTMGLQGLLCLCLASHLALQAMPTQG. In terms of domain architecture, VIT spans 29 to 158; it reads SPTDSTKGNK…KATFQLTYEE (130 aa). S-linked (Hex...) cysteine glycosylation is present at cysteine 52. Residue asparagine 69 is glycosylated (N-linked (GlcNAc...) asparagine). Serine 121 is modified (phosphoserine). An N-linked (GlcNAc...) asparagine glycan is attached at asparagine 277. The 161-residue stretch at 282-442 folds into the VWFA domain; the sequence is NKNVVFVIDI…WNFLEVRALE (161 aa). Residues threonine 394 and threonine 399 each carry the phosphothreonine modification. The span at 637 to 651 shows a compositional bias: polar residues; the sequence is SASQPSPTHPSSSIQ. The interval 637 to 656 is disordered; the sequence is SASQPSPTHPSSSIQKLPDR. A glycan (O-linked (GalNAc...) serine) is linked at serine 639. O-linked (GalNAc...) threonine glycosylation occurs at threonine 644. The residue at position 663 (aspartate 663) is an Aspartate 1-(chondroitin 4-sulfate)-ester. The propeptide occupies 664–902; the sequence is PHFIIRVPQK…HTDYIVPDIF (239 aa). A glycan (N-linked (GlcNAc...) asparagine) is linked at asparagine 741.

This sequence belongs to the ITIH family. I-alpha-I plasma protease inhibitors are assembled from one or two heavy chains (HC) and one light chain, bikunin. Inter-alpha-inhibitor (I-alpha-I) is composed of ITIH1/HC1, ITIH2/HC2 and bikunin. Interacts with TNFAIP6 (via Link and CUB domains). Heavy chains are linked to bikunin via chondroitin 4-sulfate esterified to the alpha-carboxyl of the C-terminal aspartate after propeptide cleavage. In terms of processing, the S-linked glycan is composed of two 6-carbon sugars, possibly Glc or Gal.

The protein resides in the secreted. Functionally, may act as a carrier of hyaluronan in serum or as a binding protein between hyaluronan and other matrix protein, including those on cell surfaces in tissues to regulate the localization, synthesis and degradation of hyaluronan which are essential to cells undergoing biological processes. In Sus scrofa (Pig), this protein is Inter-alpha-trypsin inhibitor heavy chain H1 (ITIH1).